A 250-amino-acid chain; its full sequence is Cell division protein ZapD (250 aa).

This sequence belongs to the ZapD family. Interacts with FtsZ.

It is found in the cytoplasm. Its function is as follows. Cell division factor that enhances FtsZ-ring assembly. Directly interacts with FtsZ and promotes bundling of FtsZ protofilaments, with a reduction in FtsZ GTPase activity. This chain is Cell division protein ZapD, found in Pectobacterium atrosepticum (strain SCRI 1043 / ATCC BAA-672) (Erwinia carotovora subsp. atroseptica).